The sequence spans 625 residues: Chaperone protein DnaK (625 aa).

Threonine 197 is modified (phosphothreonine; by autocatalysis). The segment at 598–625 is disordered; sequence AYAKEQGGTQQGTDTKKKDDDVIDAEVE.

This sequence belongs to the heat shock protein 70 family.

Its function is as follows. Acts as a chaperone. This Helicobacter hepaticus (strain ATCC 51449 / 3B1) protein is Chaperone protein DnaK.